Consider the following 393-residue polypeptide: MTRVVLAAAYRTPIGVFGGAFKDVPAYDLGATLIEHIIKETGLNPSEIDEVIIGNVLQAGQGQNPARIAAMKGGLPETVPAFTVNKVCGSGLKSIQLAYQSIVTGENDIVLAGGMENMSQSPMLVNNSRFGFKMGHQSMVDSMVYDGLTDVFNQYHMGITAENLVEQYGISREEQDTFAVNSQHKAVRAQQNGEFDSEIVPVSIPQRKGEPILVTKDEGVRENVSVEKLSRLRPAFKKDGTVTAGNASGINDGAAMMLVMSEDKAKELNIEPLAVLDGFGSHGVDPSIMGIAPVGAVEKALKRSKKELSDIDVFELNEAFAAQLLAVDRELKLPPEKVNVKGGAIALGHPIGASGARVLVTLLHQLNDEVETGLTSLCIGGGQAIAAVVSKYK.

The Acyl-thioester intermediate role is filled by cysteine 88. Active-site proton acceptor residues include histidine 349 and cysteine 378.

This sequence belongs to the thiolase-like superfamily. Thiolase family.

The protein resides in the cytoplasm. It carries out the reaction 2 acetyl-CoA = acetoacetyl-CoA + CoA. This is Probable acetyl-CoA acyltransferase from Staphylococcus aureus (strain Mu50 / ATCC 700699).